We begin with the raw amino-acid sequence, 317 residues long: MSSEQKSQHCKPEEGVEAQEEALGLVGAQAPTTEEQEAAVSSSSPLVPGTLEEVPAAESAGPPQSPQGASALPTTISFTCWRQPNEGSSSQEEEGPSTSPDAESLFREALSNKVDELAHFLLRKYRAKELVTKAEMLERVIKNYKRCFPVIFGKASESLKMIFGIDVKEVDPASNTYTLVTCLGLSYDGLLGNNQIFPKTGLLIIVLGTIAMEGDSASEEEIWEELGVMGVYDGREHTVYGEPRKLLTQDWVQENYLEYRQVPGSNPARYEFLWGPRALAETSYVKVLEHVVRVNARVRIAYPSLREAALLEEEEGV.

Over residues 1–14 (MSSEQKSQHCKPEE) the composition is skewed to basic and acidic residues. Residues 1-102 (MSSEQKSQHC…EEGPSTSPDA (102 aa)) form a disordered region. A compositionally biased stretch (polar residues) spans 66 to 82 (PQGASALPTTISFTCWR). The MAGE domain occupies 110–309 (LSNKVDELAH…IAYPSLREAA (200 aa)).

In terms of tissue distribution, expressed in many tumors of several types, such as melanoma, head and neck squamous cell carcinoma, lung carcinoma and breast carcinoma, but not in normal tissues except for testes and placenta.

Regulates cell proliferation through the inhibition of cell cycle arrest at the G1 phase. Also negatively regulates p53-mediated apoptosis. The chain is Melanoma-associated antigen 4 (MAGEA4) from Homo sapiens (Human).